Consider the following 454-residue polypeptide: MTLPLHVVILAAGEGKRMRSALPKVLQPLAGQPMLAHVIATARELQPAAIHVVHGHGGAQVQAAFADQPDLQWAEQRQQLGTGHAVQQALHAVPDAATVLVLYGDVPLIRSESLRELLHAPGRIAVLVADLANPTGYGRIVRNPEGKVAAIVEQKDADDEQRRIRTINTGILTAESTALRRWLGGLSNDNAQGEFYLTDVFARAAADYTPADMVQVSDPQDVEGANDPWQLAQLERAWQLRAARALCLQGVRMADPARVEQRGRVQVGHDVQLDIDVILEGEVTLGDGVVIGPFVRLRDVQLAAGTQVRAHCDLEGVVTEGAVQIGPFARLRPGTVLADGVHIGNFVETKKVVMGAGSKANHLTYLGDAVVGSKVNIGAGTITCNYDGVNKSQTTIGDGAFVGSNSALVAPIEIGTGATIGAGSVITRDAPPHQLSVARPRQTVIEGWERPKKK.

The tract at residues 1–228 (MTLPLHVVIL…PQDVEGANDP (228 aa)) is pyrophosphorylase. UDP-N-acetyl-alpha-D-glucosamine contacts are provided by residues 10–13 (LAAG), lysine 24, glutamine 76, 81–82 (GT), 103–105 (YGD), glycine 138, glutamate 153, asparagine 168, and asparagine 226. Aspartate 105 provides a ligand contact to Mg(2+). Asparagine 226 serves as a coordination point for Mg(2+). The interval 229–249 (WQLAQLERAWQLRAARALCLQ) is linker. The interval 250-454 (GVRMADPARV…IEGWERPKKK (205 aa)) is N-acetyltransferase. Positions 332 and 350 each coordinate UDP-N-acetyl-alpha-D-glucosamine. Histidine 362 functions as the Proton acceptor in the catalytic mechanism. UDP-N-acetyl-alpha-D-glucosamine contacts are provided by tyrosine 365 and asparagine 376. Acetyl-CoA is bound by residues alanine 379, 385–386 (NY), serine 404, alanine 422, and arginine 439.

The protein in the N-terminal section; belongs to the N-acetylglucosamine-1-phosphate uridyltransferase family. In the C-terminal section; belongs to the transferase hexapeptide repeat family. In terms of assembly, homotrimer. It depends on Mg(2+) as a cofactor.

The protein localises to the cytoplasm. The catalysed reaction is alpha-D-glucosamine 1-phosphate + acetyl-CoA = N-acetyl-alpha-D-glucosamine 1-phosphate + CoA + H(+). The enzyme catalyses N-acetyl-alpha-D-glucosamine 1-phosphate + UTP + H(+) = UDP-N-acetyl-alpha-D-glucosamine + diphosphate. Its pathway is nucleotide-sugar biosynthesis; UDP-N-acetyl-alpha-D-glucosamine biosynthesis; N-acetyl-alpha-D-glucosamine 1-phosphate from alpha-D-glucosamine 6-phosphate (route II): step 2/2. It participates in nucleotide-sugar biosynthesis; UDP-N-acetyl-alpha-D-glucosamine biosynthesis; UDP-N-acetyl-alpha-D-glucosamine from N-acetyl-alpha-D-glucosamine 1-phosphate: step 1/1. It functions in the pathway bacterial outer membrane biogenesis; LPS lipid A biosynthesis. Catalyzes the last two sequential reactions in the de novo biosynthetic pathway for UDP-N-acetylglucosamine (UDP-GlcNAc). The C-terminal domain catalyzes the transfer of acetyl group from acetyl coenzyme A to glucosamine-1-phosphate (GlcN-1-P) to produce N-acetylglucosamine-1-phosphate (GlcNAc-1-P), which is converted into UDP-GlcNAc by the transfer of uridine 5-monophosphate (from uridine 5-triphosphate), a reaction catalyzed by the N-terminal domain. This chain is Bifunctional protein GlmU, found in Xanthomonas campestris pv. campestris (strain B100).